Reading from the N-terminus, the 257-residue chain is Molybdate-binding protein ModA (257 aa).

A signal peptide spans 1–24; the sequence is MARKWLNLFAGAALSFAVAGNALA. Positions 36, 63, 149, 176, and 194 each coordinate molybdate.

It belongs to the bacterial solute-binding protein ModA family. As to quaternary structure, the complex is composed of two ATP-binding proteins (ModC), two transmembrane proteins (ModB) and a solute-binding protein (ModA).

It localises to the periplasm. Functionally, part of the ABC transporter complex ModABC involved in the transport of molybdenum into the cell. Binds molybdate with high affinity in vitro and with a similar affinity in vivo. Binds tungstate with high affinity in vitro. Binds unnatural anion perrhenate with high affinity in vitro. Does not bind sulfate, phosphate, arsenate, selenate, chlorate, metavanadate, nitrate, perchlorate, permanganate or carbonate. The sequence is that of Molybdate-binding protein ModA (modA) from Escherichia coli (strain K12).